The chain runs to 369 residues: uncharacterized protein (369 aa).

Over residues 110 to 121 (ARPTDAFGAPIA) the composition is skewed to low complexity. Residues 110-172 (ARPTDAFGAP…PPPPASGGGA (63 aa)) form a disordered region. A compositionally biased stretch (pro residues) spans 122–136 (PSEPTPASAPSPPKA).

This is an uncharacterized protein from Lymantria dispar multicapsid nuclear polyhedrosis virus (LdMNPV).